The primary structure comprises 449 residues: MNKIKEGANVRITIYSPEVYTYGAMLIGGILKHKGYNVHLVRKIDKTLFLKSDVIIFSLYSTLHILDKNIREAIDFIKKVRKNKTKVYVAGCVSTYPEIILNELNVDGVIVGEGEITTPKIIEGDKEGLAYKEGDEIVINYPKEKPDLNHPLPLIPKDIEQQSIRGANVYIETHRGCLGNCTFCQVPKFFGKTIRSRDVEDVVEEVKAFKRAGAKRIAISGGTGSLYAFKKSINRDKFFELLEKVSEVIGKNNLSVPDMRVDYVDEEILEAIKNYTIGWVFYGIESGSDKILKDMKKGTNREKNLDAIKLAKDCGVKVAGSFIVAYPTETEMDYLLTKDFIVDAELDDVFVSIAEPIPTTELCDLVLSMPKEENLLYKMHEGEYRKLGLSEAEARCFDLLIHAEMWKSMPKPLTPQLYNLYLNEARIQGKDIRAITDLLFKYRDLLLKK.

In terms of domain architecture, Radical SAM core spans 163–390; that stretch reads SIRGANVYIE…EGEYRKLGLS (228 aa). Cysteine 177, cysteine 181, and cysteine 184 together coordinate [4Fe-4S] cluster.

Belongs to the methylthiotransferase family. [4Fe-4S] cluster serves as cofactor.

In Methanocaldococcus jannaschii (strain ATCC 43067 / DSM 2661 / JAL-1 / JCM 10045 / NBRC 100440) (Methanococcus jannaschii), this protein is Putative methylthiotransferase MJ0865.